We begin with the raw amino-acid sequence, 376 residues long: Ribonucleoside-diphosphate reductase subunit beta (376 aa).

Asp-85, Glu-116, and His-119 together coordinate Fe cation. Tyr-123 is an active-site residue. Residues Glu-205, Glu-239, and His-242 each coordinate Fe cation.

Belongs to the ribonucleoside diphosphate reductase small chain family. Tetramer of two alpha and two beta subunits. It depends on Fe cation as a cofactor.

The catalysed reaction is a 2'-deoxyribonucleoside 5'-diphosphate + [thioredoxin]-disulfide + H2O = a ribonucleoside 5'-diphosphate + [thioredoxin]-dithiol. Provides the precursors necessary for DNA synthesis. Catalyzes the biosynthesis of deoxyribonucleotides from the corresponding ribonucleotides. The chain is Ribonucleoside-diphosphate reductase subunit beta (nrdB) from Buchnera aphidicola subsp. Baizongia pistaciae (strain Bp).